Consider the following 712-residue polypeptide: Ribosomal RNA large subunit methyltransferase K/L (712 aa).

The THUMP domain occupies 42–153; the sequence is QALRIVMWSR…KGRASLSIDL (112 aa).

It belongs to the methyltransferase superfamily. RlmKL family.

It is found in the cytoplasm. It catalyses the reaction guanosine(2445) in 23S rRNA + S-adenosyl-L-methionine = N(2)-methylguanosine(2445) in 23S rRNA + S-adenosyl-L-homocysteine + H(+). It carries out the reaction guanosine(2069) in 23S rRNA + S-adenosyl-L-methionine = N(2)-methylguanosine(2069) in 23S rRNA + S-adenosyl-L-homocysteine + H(+). Specifically methylates the guanine in position 2445 (m2G2445) and the guanine in position 2069 (m7G2069) of 23S rRNA. This Stenotrophomonas maltophilia (strain K279a) protein is Ribosomal RNA large subunit methyltransferase K/L.